A 362-amino-acid chain; its full sequence is MNFLHSTLDRLREFTPVSNTSTFRTNGQITPEEFVAAGDYLVFKFPTWSWADASPTSKRASYLPAGKQFLVTRGVPCHRRLDDDFAGEAGHDETVVGDGEDFRGTGHSPGDDEDGWLRTGGLAASQEARARDVRTVDESGEMGEREDDEDDIPDMEDEDDDDEAIIRDPKADNANSSRRTYTIYIAYTPYYRTPRLYLSGYLSSSQPLPPHLMMEDIVGDYKDKTVTLEDFPYFSNNIKMASIHPCKHASVMKTLLDRADAALKLRREKQKQGKTVPGAKDTGMEGLVDDFEKTKISDKKAMLEGLKAGGNGNDEWEVLQHDQDFASEEEEVAIRVDQYLVVFLKFMASVTPGIEHDFTMGV.

The tract at residues 84 to 168 (DFAGEAGHDE…DDDDEAIIRD (85 aa)) is flexible region. Basic and acidic residues-rich tracts occupy residues 85-104 (FAGE…DFRG) and 128-137 (ARARDVRTVD). The disordered stretch occupies residues 85-164 (FAGEAGHDET…MEDEDDDDEA (80 aa)). Residues 138 to 163 (ESGEMGEREDDEDDIPDMEDEDDDDE) show a composition bias toward acidic residues. Cys246 serves as the catalytic Glycyl thioester intermediate. The interval 250–338 (SVMKTLLDRA…EEEVAIRVDQ (89 aa)) is handle region.

The protein belongs to the ATG3 family. In terms of assembly, monomer. Interacts with atg8 through an intermediate thioester bond through the C-terminal Gly of atg8. Also interacts with the 40 amino acid C-terminal region of the E1-like atg7 enzyme. Also interacts with the atg12-atg5 conjugate.

It is found in the cytoplasm. Functionally, E2 conjugating enzyme required for the cytoplasm to vacuole transport (Cvt) and autophagy. Required for selective autophagic degradation of the nucleus (nucleophagy) as well as for mitophagy which contributes to regulate mitochondrial quantity and quality by eliminating the mitochondria to a basal level to fulfill cellular energy requirements and preventing excess ROS production. Responsible for the E2-like covalent binding of phosphatidylethanolamine to the C-terminal Gly of atg8. The atg12-atg5 conjugate plays a role of an E3 and promotes the transfer of atg8 from atg3 to phosphatidylethanolamine (PE). This step is required for the membrane association of atg8. The formation of the atg8-phosphatidylethanolamine conjugate is essential for autophagy and for the cytoplasm to vacuole transport (Cvt). The atg8-PE conjugate mediates tethering between adjacent membranes and stimulates membrane hemifusion, leading to expansion of the autophagosomal membrane during autophagy. The polypeptide is Autophagy-related protein 3 (atg3) (Sclerotinia sclerotiorum (strain ATCC 18683 / 1980 / Ss-1) (White mold)).